Here is a 757-residue protein sequence, read N- to C-terminus: Catalase-peroxidase (757 aa).

Residues 1-28 (MENQSNDISKCPFHNGSMDNQAASGTKN) form a disordered region. Residues 17–28 (SMDNQAASGTKN) show a composition bias toward polar residues. The segment at residues 100 to 247 (WHSAGTYRVH…LAAVQMGLIY (148 aa)) is a cross-link (tryptophyl-tyrosyl-methioninium (Trp-Tyr) (with M-273)). His-101 (proton acceptor) is an active-site residue. The segment at residues 247–273 (YVNPEGPDGNPDPILAAKDIRDTFGRM) is a cross-link (tryptophyl-tyrosyl-methioninium (Tyr-Met) (with W-100)). His-288 contributes to the heme b binding site.

It belongs to the peroxidase family. Peroxidase/catalase subfamily. Homodimer or homotetramer. Heme b serves as cofactor. Post-translationally, formation of the three residue Trp-Tyr-Met cross-link is important for the catalase, but not the peroxidase activity of the enzyme.

The catalysed reaction is H2O2 + AH2 = A + 2 H2O. It catalyses the reaction 2 H2O2 = O2 + 2 H2O. Functionally, bifunctional enzyme with both catalase and broad-spectrum peroxidase activity. This chain is Catalase-peroxidase, found in Flavobacterium johnsoniae (strain ATCC 17061 / DSM 2064 / JCM 8514 / BCRC 14874 / CCUG 350202 / NBRC 14942 / NCIMB 11054 / UW101) (Cytophaga johnsonae).